The primary structure comprises 218 residues: Probable nicotinate-nucleotide adenylyltransferase (218 aa).

The protein belongs to the NadD family.

The catalysed reaction is nicotinate beta-D-ribonucleotide + ATP + H(+) = deamido-NAD(+) + diphosphate. The protein operates within cofactor biosynthesis; NAD(+) biosynthesis; deamido-NAD(+) from nicotinate D-ribonucleotide: step 1/1. In terms of biological role, catalyzes the reversible adenylation of nicotinate mononucleotide (NaMN) to nicotinic acid adenine dinucleotide (NaAD). The chain is Probable nicotinate-nucleotide adenylyltransferase from Halorhodospira halophila (strain DSM 244 / SL1) (Ectothiorhodospira halophila (strain DSM 244 / SL1)).